Here is a 288-residue protein sequence, read N- to C-terminus: ATP synthase gamma chain (288 aa).

Belongs to the ATPase gamma chain family. F-type ATPases have 2 components, CF(1) - the catalytic core - and CF(0) - the membrane proton channel. CF(1) has five subunits: alpha(3), beta(3), gamma(1), delta(1), epsilon(1). CF(0) has three main subunits: a, b and c.

Its subcellular location is the cell inner membrane. In terms of biological role, produces ATP from ADP in the presence of a proton gradient across the membrane. The gamma chain is believed to be important in regulating ATPase activity and the flow of protons through the CF(0) complex. This Rickettsia canadensis (strain McKiel) protein is ATP synthase gamma chain.